Here is a 333-residue protein sequence, read N- to C-terminus: Glyceraldehyde-3-phosphate dehydrogenase (333 aa).

Serine 1 bears the N-acetylserine mark. Residues 10–11 (RI), aspartate 31, and serine 118 each bind NAD(+). D-glyceraldehyde 3-phosphate contacts are provided by residues 147–149 (SCT), threonine 178, 207–208 (TG), and arginine 230. The Nucleophile role is filled by cysteine 148. NAD(+) is bound at residue asparagine 312.

It belongs to the glyceraldehyde-3-phosphate dehydrogenase family. In terms of assembly, homotetramer.

Its subcellular location is the cytoplasm. The enzyme catalyses D-glyceraldehyde 3-phosphate + phosphate + NAD(+) = (2R)-3-phospho-glyceroyl phosphate + NADH + H(+). It functions in the pathway carbohydrate degradation; glycolysis; pyruvate from D-glyceraldehyde 3-phosphate: step 1/5. This Homarus americanus (American lobster) protein is Glyceraldehyde-3-phosphate dehydrogenase.